The following is a 280-amino-acid chain: Cytochrome bc1 complex cytochrome c subunit (280 aa).

A helical transmembrane segment spans residues 25–45 (LSGGVLLLIALTIAGGLAAVL). Cytochrome c domains are found at residues 60-140 (ALLR…QANG) and 161-239 (NDLG…KVAT). Residues C73, C76, H77, C174, C177, and H178 each coordinate heme c. A helical transmembrane segment spans residues 258–278 (GMAMWIIGMVAAIGLALWIGA).

As to quaternary structure, the cytochrome bc1 complex is composed of a cytochrome b (QcrB), the Rieske iron-sulfur protein (QcrA) and a diheme cytochrome c (QcrC) subunit. In terms of processing, binds 2 heme c groups covalently per subunit.

Its subcellular location is the cell membrane. It catalyses the reaction a quinol + 2 Fe(III)-[cytochrome c](out) = a quinone + 2 Fe(II)-[cytochrome c](out) + 2 H(+)(out). In terms of biological role, cytochrome b subunit of the cytochrome bc1 complex, an essential component of the respiratory electron transport chain required for ATP synthesis. The bc1 complex catalyzes the oxidation of ubiquinol and the reduction of cytochrome c in the respiratory chain. The bc1 complex operates through a Q-cycle mechanism that couples electron transfer to generation of the proton gradient that drives ATP synthesis. This chain is Cytochrome bc1 complex cytochrome c subunit (qcrC), found in Mycobacterium bovis (strain ATCC BAA-935 / AF2122/97).